Here is a 1087-residue protein sequence, read N- to C-terminus: Platelet-derived growth factor receptor alpha (1087 aa).

The N-terminal stretch at 1 to 23 (MGTPPRTFLILGCFLTGPLLTLC) is a signal peptide. Residues 24-528 (QLPLPTIVPN…PTLRSELTVA (505 aa)) are Extracellular-facing. Ig-like C2-type domains lie at 26–104 (PLPT…YNHT), 116–208 (IYIY…IYIL), 213–312 (QLPV…VHDK), 314–411 (FIHL…SLLI), and 414–517 (PALI…LKLV). N-linked (GlcNAc...) asparagine glycans are attached at residues Asn44, Asn75, Asn88, and Asn102. Residues Cys49 and Cys99 are joined by a disulfide bond. Disulfide bonds link Cys149-Cys189 and Cys235-Cys290. Residues Asn353, Asn359, Asn458, and Asn468 are each glycosylated (N-linked (GlcNAc...) asparagine). A disulfide bond links Cys435 and Cys501. Residues 529 to 549 (AAVLVLLVIVIISLIVLVIIW) traverse the membrane as a helical segment. The Cytoplasmic segment spans residues 550–1087 (KQKPRYEIRW…SSDLVEDSFL (538 aa)). A phosphotyrosine; by autocatalysis mark is found at Tyr572 and Tyr574. Residues 593-954 (LVLGRILGSG…HLSEIVESLL (362 aa)) enclose the Protein kinase domain. ATP-binding positions include 599–607 (LGSGAFGKV) and Lys627. Phosphotyrosine; by autocatalysis is present on residues Tyr720, Tyr731, Tyr742, Tyr754, Tyr762, and Tyr768. Asp818 functions as the Proton acceptor in the catalytic mechanism. A phosphotyrosine; by autocatalysis mark is found at Tyr849 and Tyr988. Over residues 1000 to 1011 (KDRESGFDEQRL) the composition is skewed to basic and acidic residues. A disordered region spans residues 1000–1059 (KDRESGFDEQRLSADSGYITPLPDIDPVSEDELGKRNRHSSQTSEESAIETGSSSSTFIK). Tyr1017 bears the Phosphotyrosine; by autocatalysis mark. Polar residues predominate over residues 1039 to 1057 (SSQTSEESAIETGSSSSTF).

Belongs to the protein kinase superfamily. Tyr protein kinase family. CSF-1/PDGF receptor subfamily. In terms of assembly, interacts with homodimeric PDGFA, PDGFB and PDGFC, and with heterodimers formed by PDGFA and PDGFB. Monomer in the absence of bound ligand. Interaction with dimeric PDGFA, PDGFB and/or PDGFC leads to receptor dimerization, where both PDGFRA homodimers and heterodimers with PDGFRB are observed. Post-translationally, ubiquitinated, leading to its internalization and degradation. Autophosphorylated on tyrosine residues upon ligand binding. Autophosphorylation occurs in trans, i.e. one subunit of the dimeric receptor phosphorylates tyrosine residues on the other subunit.

Its subcellular location is the cell membrane. It is found in the cell projection. The protein resides in the cilium. The protein localises to the golgi apparatus. The enzyme catalyses L-tyrosyl-[protein] + ATP = O-phospho-L-tyrosyl-[protein] + ADP + H(+). Its activity is regulated as follows. Present in an inactive conformation in the absence of bound ligand. Binding of PDGFA and/or PDGFB leads to dimerization and activation by autophosphorylation on tyrosine residues. Its function is as follows. Tyrosine-protein kinase that acts as a cell-surface receptor for PDGFA, PDGFB and PDGFC and plays an essential role in the regulation of embryonic development, cell proliferation, survival and chemotaxis. Depending on the context, promotes or inhibits cell proliferation and cell migration. Plays an important role in the differentiation of bone marrow-derived mesenchymal stem cells. Required for normal skeleton development. Required for normal development of the gastrointestinal tract. Plays a role in cell migration and chemotaxis in wound healing. Plays a role in platelet activation, secretion of agonists from platelet granules, and in thrombin-induced platelet aggregation. Binding of its cognate ligands - homodimeric PDGFA, homodimeric PDGFB, heterodimers formed by PDGFA and PDGFB or homodimeric PDGFC -leads to the activation of several signaling cascades; the response depends on the nature of the bound ligand and is modulated by the formation of heterodimers between PDGFRA and PDGFRB. Phosphorylates PIK3R1, PLCG1, and PTPN11. Activation of PLCG1 leads to the production of the cellular signaling molecules diacylglycerol and inositol 1,4,5-trisphosphate, mobilization of cytosolic Ca(2+) and the activation of protein kinase C. Phosphorylates PIK3R1, the regulatory subunit of phosphatidylinositol 3-kinase, and thereby mediates activation of the AKT1 signaling pathway. Mediates activation of HRAS and of the MAP kinases MAPK1/ERK2 and/or MAPK3/ERK1. Promotes activation of STAT family members STAT1, STAT3 and STAT5A and/or STAT5B. Receptor signaling is down-regulated by protein phosphatases that dephosphorylate the receptor and its down-stream effectors, and by rapid internalization of the activated receptor. The protein is Platelet-derived growth factor receptor alpha (PDGFRA) of Gallus gallus (Chicken).